Consider the following 456-residue polypeptide: Solute carrier family 49 member 4 homolog (456 aa).

At 1–29 the chain is on the cytoplasmic side; sequence MGLEWSSPGERQPLLFPGGPRSPRVFGRR. The short motif at 14–15 is the Di-leucine motif; mediates lysosomal localization element; that stretch reads LL. A helical membrane pass occupies residues 30 to 50; the sequence is WLVLLLFSVLAFLQGLVWNSW. Topologically, residues 51 to 67 are lumenal; it reads GPIQISARTAYKFSGLD. A helical membrane pass occupies residues 68 to 88; that stretch reads IALLVLWGPIGFLPCFLFMWL. Residues 89–95 lie on the Cytoplasmic side of the membrane; the sequence is MDNRGLR. Residues 96-116 form a helical membrane-spanning segment; it reads ITVLLTALLMVLGAGLRCVPV. Over 117–123 the chain is Lumenal; it reads EDLAIRR. The helical transmembrane segment at 124–144 threads the bilayer; the sequence is ILIHGGQLLNGFAGPTVMNAA. The Cytoplasmic segment spans residues 145–162; sequence PFLSTTWFAPDERATATA. The helical transmembrane segment at 163 to 183 threads the bilayer; that stretch reads IASMLNYLGGACAFLVGPLVV. At 184 to 207 the chain is on the lumenal side; it reads PAPNSTSGLLLYSGSTDAIKDRIE. An N-linked (GlcNAc...) asparagine glycan is attached at N187. Residues 208-228 traverse the membrane as a helical segment; the sequence is AVMYAEFGIIFVVFAAILAYF. The Cytoplasmic segment spans residues 229–259; that stretch reads PARPPVPPSVAAASRRLSYRTSIFRLLSNLR. A helical membrane pass occupies residues 260 to 280; sequence FLLIVLAYAIPLGFYSGWIGV. At 281–292 the chain is on the lumenal side; it reads LDLILTPVHVTQ. The helical transmembrane segment at 293–313 threads the bilayer; that stretch reads VDAGWVGFWSIVGGCVVGIAV. Topologically, residues 314–326 are cytoplasmic; sequence GRFADSIRGVLKP. The chain crosses the membrane as a helical span at residues 327–347; it reads ILLLLFSGATLSATWFTLTFL. Residues 348–362 are Lumenal-facing; the sequence is SNVTHLPLTTATLYT. Residue N349 is glycosylated (N-linked (GlcNAc...) asparagine). A helical transmembrane segment spans residues 363–383; that stretch reads SCILIGVFLNGTVPIFFELFV. At 384–392 the chain is on the cytoplasmic side; it reads ETVYPIPEG. A helical transmembrane segment spans residues 393 to 413; the sequence is IACGVVTFLSNIFMGVLLVFL. Topologically, residues 414-420 are lumenal; the sequence is TMYQMEL. A helical transmembrane segment spans residues 421-441; that stretch reads SWLNWCLTGSCFLSLFFIACF. Residues 442–456 lie on the Cytoplasmic side of the membrane; that stretch reads RESYDRLYLDVFVSV.

It belongs to the major facilitator superfamily.

It is found in the lysosome membrane. The catalysed reaction is pyridoxine(out) + n H(+)(out) = pyridoxine(in) + n H(+)(in). Mediates H(+)-dependent pyridoxine transport. This is Solute carrier family 49 member 4 homolog (slc49a4) from Xenopus laevis (African clawed frog).